The chain runs to 130 residues: Lysozyme C (130 aa).

The 130-residue stretch at 1-130 (KVWERCALAR…VEQYVEGCDL (130 aa)) folds into the C-type lysozyme domain. Disulfide bonds link Cys-6-Cys-128, Cys-30-Cys-116, Cys-65-Cys-81, and Cys-77-Cys-95. Active-site residues include Glu-35 and Asp-53.

This sequence belongs to the glycosyl hydrolase 22 family. Monomer.

The catalysed reaction is Hydrolysis of (1-&gt;4)-beta-linkages between N-acetylmuramic acid and N-acetyl-D-glucosamine residues in a peptidoglycan and between N-acetyl-D-glucosamine residues in chitodextrins.. Its function is as follows. Lysozymes have primarily a bacteriolytic function; those in tissues and body fluids are associated with the monocyte-macrophage system and enhance the activity of immunoagents. The protein is Lysozyme C (LYZ) of Camelus dromedarius (Dromedary).